Consider the following 674-residue polypeptide: Translation initiation factor IF-2 (674 aa).

Residues 174 to 344 (IRPPVVTVMG…LLVAELREIK (171 aa)) form the tr-type G domain. The segment at 183 to 190 (GHVDHGKT) is G1. 183–190 (GHVDHGKT) contacts GTP. The segment at 208–212 (GITQS) is G2. The segment at 229-232 (DTPG) is G3. GTP contacts are provided by residues 229–233 (DTPGH) and 283–286 (NKID). Positions 283-286 (NKID) are G4. The interval 320–322 (SAR) is G5.

The protein belongs to the TRAFAC class translation factor GTPase superfamily. Classic translation factor GTPase family. IF-2 subfamily.

It localises to the cytoplasm. Its function is as follows. One of the essential components for the initiation of protein synthesis. Protects formylmethionyl-tRNA from spontaneous hydrolysis and promotes its binding to the 30S ribosomal subunits. Also involved in the hydrolysis of GTP during the formation of the 70S ribosomal complex. The polypeptide is Translation initiation factor IF-2 (Pseudothermotoga lettingae (strain ATCC BAA-301 / DSM 14385 / NBRC 107922 / TMO) (Thermotoga lettingae)).